A 578-amino-acid polypeptide reads, in one-letter code: SWR1 complex bromodomain subunit bdf1 (578 aa).

Residues 1 to 18 (MSSESRENEVKAETKDEI) show a composition bias toward basic and acidic residues. Disordered stretches follow at residues 1-89 (MSSE…PPPQ), 192-254 (DAEQ…RKNN), and 504-578 (ADSS…SESA). A compositionally biased stretch (polar residues) spans 22–36 (GSPQLNGDNNIQSSD). 2 stretches are compositionally biased toward basic and acidic residues: residues 37–52 (GHNDENEESLSRKRDS) and 60–77 (LKQEEKESMPKKEPEPTV). The 107-residue stretch at 84–190 (GMPPPQQKYC…EVFERQLKQL (107 aa)) folds into the Bromo 1 domain. Residues 219 to 242 (NSSVSSTSASVAASTAPKAASPAV) are compositionally biased toward low complexity. Ser221, Ser223, and Ser224 each carry phosphoserine. Thr225 is modified (phosphothreonine). Phosphoserine is present on residues Ser226 and Ser239. The 110-residue stretch at 251–360 (RKNNSQMRFC…NVFKEKWEAR (110 aa)) folds into the Bromo 2 domain. One can recognise an NET domain in the interval 430 to 510 (RRDLTKEYGP…KPDADSSEPA (81 aa)). A Phosphoserine modification is found at Ser511. Basic and acidic residues predominate over residues 526–537 (VLSETEQAEKIR). A compositionally biased stretch (polar residues) spans 550–563 (TSPTSPESNNAANV). Acidic residues predominate over residues 566-578 (SESDNESESSESA).

This sequence belongs to the BET family. In terms of assembly, component of the SWR1 chromatin-remodeling complex.

It is found in the nucleus. In terms of biological role, component of the SWR1 complex which mediates the ATP-dependent exchange of histone H2A for the H2A variant HZT1 leading to transcriptional regulation of selected genes by chromatin remodeling. In Schizosaccharomyces pombe (strain 972 / ATCC 24843) (Fission yeast), this protein is SWR1 complex bromodomain subunit bdf1 (bdf1).